Here is a 259-residue protein sequence, read N- to C-terminus: Deoxyribose-phosphate aldolase (259 aa).

Catalysis depends on D102, which acts as the Proton donor/acceptor. K167 (schiff-base intermediate with acetaldehyde) is an active-site residue. The active-site Proton donor/acceptor is K201.

It belongs to the DeoC/FbaB aldolase family. DeoC type 2 subfamily.

The protein resides in the cytoplasm. The enzyme catalyses 2-deoxy-D-ribose 5-phosphate = D-glyceraldehyde 3-phosphate + acetaldehyde. Its pathway is carbohydrate degradation; 2-deoxy-D-ribose 1-phosphate degradation; D-glyceraldehyde 3-phosphate and acetaldehyde from 2-deoxy-alpha-D-ribose 1-phosphate: step 2/2. Its function is as follows. Catalyzes a reversible aldol reaction between acetaldehyde and D-glyceraldehyde 3-phosphate to generate 2-deoxy-D-ribose 5-phosphate. The chain is Deoxyribose-phosphate aldolase from Enterobacter sp. (strain 638).